Consider the following 234-residue polypeptide: tRNA1(Val) (adenine(37)-N6)-methyltransferase (234 aa).

It belongs to the methyltransferase superfamily. tRNA (adenine-N(6)-)-methyltransferase family.

The protein resides in the cytoplasm. It catalyses the reaction adenosine(37) in tRNA1(Val) + S-adenosyl-L-methionine = N(6)-methyladenosine(37) in tRNA1(Val) + S-adenosyl-L-homocysteine + H(+). Its function is as follows. Specifically methylates the adenine in position 37 of tRNA(1)(Val) (anticodon cmo5UAC). This is tRNA1(Val) (adenine(37)-N6)-methyltransferase from Aliivibrio fischeri (strain ATCC 700601 / ES114) (Vibrio fischeri).